We begin with the raw amino-acid sequence, 435 residues long: Probable exopolygalacturonase B (435 aa).

Residues 1 to 15 (MKFFTAALFASAVSA) form the signal peptide. N59, N184, and N224 each carry an N-linked (GlcNAc...) asparagine glycan. D254 acts as the Proton donor in catalysis. C256 and C273 are oxidised to a cystine. 2 N-linked (GlcNAc...) asparagine glycosylation sites follow: N262 and N274. H277 is a catalytic residue. N-linked (GlcNAc...) asparagine glycosylation is found at N301, N328, N365, and N368. Residues C391 and C397 are joined by a disulfide bond.

The protein belongs to the glycosyl hydrolase 28 family.

It is found in the secreted. It carries out the reaction [(1-&gt;4)-alpha-D-galacturonosyl](n) + H2O = alpha-D-galacturonate + [(1-&gt;4)-alpha-D-galacturonosyl](n-1). Its function is as follows. Specific in hydrolyzing the terminal glycosidic bond of polygalacturonic acid and oligogalacturonates. This chain is Probable exopolygalacturonase B (pgxB), found in Aspergillus terreus (strain NIH 2624 / FGSC A1156).